The following is a 510-amino-acid chain: NAD(P)H-quinone oxidoreductase subunit 2 B, chloroplastic (510 aa).

The next 12 membrane-spanning stretches (helical) occupy residues Leu-24–Leu-44, Ile-57–Phe-77, Ile-99–Ile-119, Met-124–Cys-144, Tyr-183–Gly-203, Pro-227–Ala-247, Trp-295–Ile-315, Met-323–Asp-343, Gly-347–Ala-367, Ala-395–Phe-415, Leu-418–Leu-438, and Met-484–Ile-504.

It belongs to the complex I subunit 2 family. In terms of assembly, NDH is composed of at least 16 different subunits, 5 of which are encoded in the nucleus.

Its subcellular location is the plastid. The protein resides in the chloroplast thylakoid membrane. The catalysed reaction is a plastoquinone + NADH + (n+1) H(+)(in) = a plastoquinol + NAD(+) + n H(+)(out). The enzyme catalyses a plastoquinone + NADPH + (n+1) H(+)(in) = a plastoquinol + NADP(+) + n H(+)(out). Functionally, NDH shuttles electrons from NAD(P)H:plastoquinone, via FMN and iron-sulfur (Fe-S) centers, to quinones in the photosynthetic chain and possibly in a chloroplast respiratory chain. The immediate electron acceptor for the enzyme in this species is believed to be plastoquinone. Couples the redox reaction to proton translocation, and thus conserves the redox energy in a proton gradient. The protein is NAD(P)H-quinone oxidoreductase subunit 2 B, chloroplastic of Calycanthus floridus var. glaucus (Eastern sweetshrub).